The sequence spans 177 residues: FCS-Like Zinc finger 1 (177 aa).

The span at 22-46 shows a compositional bias: low complexity; sequence SLSEMEAGFSGNNNNSNNHGNPQNG. 2 disordered regions span residues 22–49 and 134–177; these read SLSE…GVVS and ERDE…VAAA. An FLZ-type zinc finger spans residues 96 to 140; sequence HFLDSCFLCKKPLGDNRDIYMYRGDTPFCSEECRQEQIERDEAKE. Composition is skewed to basic and acidic residues over residues 134–143 and 154–168; these read ERDEAKEKKQ and RRKE…RDYA.

The protein belongs to the FLZ family. As to quaternary structure, interacts with KIN10 and KIN11 via its FLZ-type zinc finger domain. Interacts with KINB1, KINB2 and KINB3 via its N-terminal part. Interacts with DSP3 and BBX21 via its FLZ-type zinc finger domain. Forms heterodimer with FLZ7 and FLZ15 in vitro.

Its subcellular location is the nucleus. The protein localises to the cytoplasm. Functionally, may act as an adapter to facilitate the interaction of SnRK1 complex with effector proteins, conferring tissue- and stimulus-type specific differences in the SnRK1 regulation pathway. This Arabidopsis thaliana (Mouse-ear cress) protein is FCS-Like Zinc finger 1.